The primary structure comprises 495 residues: Aspartyl/glutamyl-tRNA(Asn/Gln) amidotransferase subunit B (495 aa).

Belongs to the GatB/GatE family. GatB subfamily. Heterotrimer of A, B and C subunits.

The enzyme catalyses L-glutamyl-tRNA(Gln) + L-glutamine + ATP + H2O = L-glutaminyl-tRNA(Gln) + L-glutamate + ADP + phosphate + H(+). It carries out the reaction L-aspartyl-tRNA(Asn) + L-glutamine + ATP + H2O = L-asparaginyl-tRNA(Asn) + L-glutamate + ADP + phosphate + 2 H(+). In terms of biological role, allows the formation of correctly charged Asn-tRNA(Asn) or Gln-tRNA(Gln) through the transamidation of misacylated Asp-tRNA(Asn) or Glu-tRNA(Gln) in organisms which lack either or both of asparaginyl-tRNA or glutaminyl-tRNA synthetases. The reaction takes place in the presence of glutamine and ATP through an activated phospho-Asp-tRNA(Asn) or phospho-Glu-tRNA(Gln). This chain is Aspartyl/glutamyl-tRNA(Asn/Gln) amidotransferase subunit B, found in Halobacterium salinarum (strain ATCC 700922 / JCM 11081 / NRC-1) (Halobacterium halobium).